We begin with the raw amino-acid sequence, 535 residues long: Glucan 1,6-alpha-glucosidase (535 aa).

Aspartate 194 functions as the Nucleophile in the catalytic mechanism. The active-site Proton donor is glutamate 236.

This sequence belongs to the glycosyl hydrolase 13 family.

It is found in the cytoplasm. The enzyme catalyses Hydrolysis of (1-&gt;6)-alpha-D-glucosidic linkages in (1-&gt;6)-alpha-D-glucans and derived oligosaccharides.. In terms of biological role, the physiological substrates may be short isomaltosaccharides. The sequence is that of Glucan 1,6-alpha-glucosidase (dexB) from Streptococcus pneumoniae serotype 4 (strain ATCC BAA-334 / TIGR4).